Here is an 874-residue protein sequence, read N- to C-terminus: Ribosome biogenesis protein ERB1 (874 aa).

Residues 1–148 form a disordered region; that stretch reads MAKKEVSASK…DAFAAADAAT (148 aa). Residues 27–41 are compositionally biased toward basic and acidic residues; it reads QAVEKEEAEKEKEEG. Over residues 55–77 the composition is skewed to acidic residues; that stretch reads PESDSDDEGAAAAEEEEEEEEQQ. A compositionally biased stretch (basic and acidic residues) spans 78-89; sequence QDVKELDLDKGE. 2 stretches are compositionally biased toward acidic residues: residues 95–104 and 128–139; these read SDAEDFDSEE and PKEDGDEQDEQD. Positions 312-429 are required for interaction with NOP7; it reads RFVPSKHEAK…LRLVPGYQDS (118 aa). Residues 429–465 are required for interaction with YTM1; sequence SVRERFERSLDLYLAPRLRKNKLNIDPESLIPELPSP. WD repeat units lie at residues 481–520 and 529–569; these read GHTGKIRTLSIDPQGLWLATGSDDGSVRIWEVLTGRQVFK and NGED…FEIE. Residues 593 to 602 show a composition bias toward basic and acidic residues; it reads KVKGEDTKGD. Residues 593–640 are disordered; that stretch reads KVKGEDTKGDLDDDEEEEEEEEDDDDDEGQGKVKAHNSTAPAKKDVAK. Residues 603–620 are compositionally biased toward acidic residues; that stretch reads LDDDEEEEEEEEDDDDDE. 5 WD repeats span residues 658 to 700, 703 to 741, 744 to 783, 787 to 827, and 843 to 874; these read QCRR…SQSP, KSKGVIMDAKFHPFKPQLFVASQRQIKIYDLAQQTLLKK, PGVRLLSTIDLHPRGDNLLAASYDKRVLWHDLDLAATPYK, YHEK…DLMT, and INQIGVLDIVWHPKEAWLFSAGADGTARLWTT.

This sequence belongs to the WD repeat BOP1/ERB1 family. Component of the NOP7 complex, composed of ERB1, NOP7 and YTM1. The complex is held together by ERB1, which interacts with NOP7 via its N-terminal domain and with YTM1 via a high-affinity interaction between the seven-bladed beta-propeller domains of the 2 proteins. The NOP7 complex associates with the 66S pre-ribosome.

The protein localises to the nucleus. It localises to the nucleolus. Its subcellular location is the nucleoplasm. Its function is as follows. Component of the NOP7 complex, which is required for maturation of the 25S and 5.8S ribosomal RNAs and formation of the 60S ribosome. The chain is Ribosome biogenesis protein ERB1 from Lodderomyces elongisporus (strain ATCC 11503 / CBS 2605 / JCM 1781 / NBRC 1676 / NRRL YB-4239) (Yeast).